The primary structure comprises 894 residues: CWF19-like protein 2 (894 aa).

Residues 1 to 147 (MATSMAAASG…DEKSGKDDTQ (147 aa)) form a disordered region. Basic and acidic residues predominate over residues 13–56 (ESAKSIEERKEQTRNARAEVLRQAKANFEKEERRKELKRLRGED). The stretch at 13–107 (ESAKSIEERK…KKQKYEKNNE (95 aa)) forms a coiled coil. S75 is modified (phosphoserine). The segment covering 76–99 (VKKKKKKDKHSKKAKKEKKKKSKK) has biased composition (basic residues). Over residues 128–147 (PDKEKAWKVKDEKSGKDDTQ) the composition is skewed to basic and acidic residues. A coiled-coil region spans residues 166 to 281 (SSSSLKAEKE…AEKAASTKED (116 aa)). K171 is covalently cross-linked (Glycyl lysine isopeptide (Lys-Gly) (interchain with G-Cter in SUMO2)). A compositionally biased stretch (basic and acidic residues) spans 270–284 (EDAEKAASTKEDYRR). The segment at 270-483 (EDAEKAASTK…STFAGSPERE (214 aa)) is disordered. Over residues 320 to 330 (TTDTAKNSNNE) the composition is skewed to polar residues. The segment covering 332–352 (FIGDEKDKRPGSLETCRRESN) has biased composition (basic and acidic residues). Phosphoserine occurs at positions 360 and 372. Composition is skewed to basic and acidic residues over residues 410–430 (KNSE…DKKH) and 440–473 (TDEH…RDTK). 2 positions are modified to phosphoserine: S479 and S484. The stretch at 502–530 (KAEMMGNMELAEQLKVQLEKANKFKETIT) forms a coiled coil. Residues 561–583 (NTPGKSLESQGGRRKRQMVSTHE) are disordered. K604 participates in a covalent cross-link: Glycyl lysine isopeptide (Lys-Gly) (interchain with G-Cter in SUMO2). Positions 644–675 (AAERERLGEEEENQRKKAIAEHRSLAAQMEKC) form a coiled coil.

This sequence belongs to the CWF19 family.

The sequence is that of CWF19-like protein 2 (CWF19L2) from Homo sapiens (Human).